The sequence spans 370 residues: Zinc finger protein 830 (370 aa).

2 disordered regions span residues 1-21 (MASSTSARTPAGKRVVNQEEL) and 75-220 (HRER…LVPH). Ala2 bears the N-acetylalanine mark. Residues 16–40 (VNQEELRRLMKEKQRLSTNRKRIES) are a coiled coil. Residues 53-75 (CALCNTPVKSELLWQTHVLGKQH) form a C2H2-type zinc finger. A compositionally biased stretch (polar residues) spans 90 to 99 (QGPSAGTAPQ). Residues 104-115 (KTTDVESQDAKK) are compositionally biased toward basic and acidic residues. Residues 121–134 (DQVQPSTSASSANF) are compositionally biased toward polar residues. Residues 156–171 (DYEEEEEEEEEEELGG) are compositionally biased toward acidic residues. The segment covering 172–191 (GEERRDSSKHLPDAQGREHS) has biased composition (basic and acidic residues). Residues 196–212 (RETTSNVLPNDPFNTNP) show a composition bias toward polar residues. Ser223 carries the post-translational modification Phosphoserine. Positions 310 to 338 (IECYRRVEKLRNRQDEIKNKLKEVLTIKE) form a coiled coil. Ser349 and Ser360 each carry phosphoserine.

As to quaternary structure, component of the XAB2 complex, a multimeric protein complex composed of XAB2, PRPF19, AQR, ZNF830, ISY1, and PPIE; this complex binds preferentially to RNA. Interacts with XAB2. Identified in a pentameric intron-binding (IB) complex composed of AQR, XAB2, ISY1, ZNF830 and PPIE that is incorporated into the spliceosome as a preassembled complex. The IB complex does not contain PRPF19. Post-translationally, phosphorylated in response to DNA damage by the cell cycle checkpoint kinases ATR/ATM.

Its subcellular location is the nucleus. It is found in the chromosome. It localises to the nucleus speckle. Its function is as follows. May play a role in pre-mRNA splicing as component of the spliceosome. Acts as an important regulator of the cell cycle that participates in the maintenance of genome integrity. During cell cycle progression in embryonic fibroblast, prevents replication fork collapse, double-strand break formation and cell cycle checkpoint activation. Controls mitotic cell cycle progression and cell survival in rapidly proliferating intestinal epithelium and embryonic stem cells. During the embryo preimplantation, controls different aspects of M phase. During early oocyte growth, plays a role in oocyte survival by preventing chromosomal breaks formation, activation of TP63 and reduction of transcription. The sequence is that of Zinc finger protein 830 from Rattus norvegicus (Rat).